A 357-amino-acid polypeptide reads, in one-letter code: G-protein coupled receptor 183 (357 aa).

Topologically, residues 1–27 (MANNFTTPLATSHGNNCDLYAHHSTAR) are extracellular. N-linked (GlcNAc...) asparagine glycosylation occurs at N4. A helical membrane pass occupies residues 28-53 (VLMPLHYSLVFIIGLVGNLLALVVIV). The Cytoplasmic portion of the chain corresponds to 54 to 73 (QNRKKINSTTLYSMNLVISD). The helical transmembrane segment at 74–91 (ILFTTALPTRIAYYALGF) threads the bilayer. 7alpha,25-dihydroxycholesterol is bound at residue R83. Residues 92–101 (DWRIGDALCR) are Extracellular-facing. Residues C100 and C177 are joined by a disulfide bond. The helical transmembrane segment at 102 to 123 (VTALVFYINTYAGVNFMTCLSI) threads the bilayer. Residues Y108 and Y112 each contribute to the 7alpha,25-dihydroxycholesterol site. Residues 122–130 (SIDRFFAVV) are interaction with G proteins. Residues 124–145 (DRFFAVVHPLRYNKIKRIEYAK) are Cytoplasmic-facing. Residues 146-164 (GVCLSVWILVFAQTLPLLL) form a helical membrane-spanning segment. Residues 165 to 188 (TPMSKEEGDKTTCMEYPNFEGTAS) lie on the Extracellular side of the membrane. Residues 189 to 211 (LPWILLGACLLGYVLPITVILLC) form a helical membrane-spanning segment. Residues 212–237 (YSQICCKLFRTAKQNPLTEKSGVNKK) lie on the Cytoplasmic side of the membrane. The helical transmembrane segment at 238 to 261 (ALNTIILIIVVFILCFTPYHVAII) threads the bilayer. Y256 is a 7alpha,25-dihydroxycholesterol binding site. The Extracellular segment spans residues 262-283 (QHMIKMLCSPGALECGARHSFQ). The helical transmembrane segment at 284 to 308 (ISLHFTVCLMNFNCCMDPFIYFFAC) threads the bilayer. Over 309–357 (KGYKRKVMKMLKRQVSVSISSAVRSAPEENSREMTESQMMIHSKASNGR) the chain is Cytoplasmic. S324 and S345 each carry phosphoserine. Positions 336-357 (EENSREMTESQMMIHSKASNGR) are disordered. Over residues 344-357 (ESQMMIHSKASNGR) the composition is skewed to polar residues.

Belongs to the G-protein coupled receptor 1 family. Homodimer and heterodimer. Heterodimerizes with CXCR5; leading to modulate the interaction between of CXCL13 and CXCR5. As to expression, expressed in mature B-cells and increases in expression early after activation, before being down-regulated in germinal center B-cells. Expressed in astrocytes. Specifically expressed in CD4(+) dendritic cells but not in CD8(+) dendritic cells. Expressed in monocyte/osteoclasts precursors and mature osteoclasts.

It is found in the cell membrane. In terms of biological role, G-protein coupled receptor expressed in lymphocytes that acts as a chemotactic receptor for B-cells, T-cells, splenic dendritic cells, monocytes/macrophages and astrocytes. Receptor for oxysterol 7-alpha,25-dihydroxycholesterol (7-alpha,25-OHC) and other related oxysterols. Mediates cell positioning and movement of a number of cells by binding the 7-alpha,25-OHC ligand that forms a chemotactic gradient. Binding of 7-alpha,25-OHC mediates the correct localization of B-cells during humoral immune responses. Collaborates with CXCR5 to mediate B-cell migration; probably by forming a heterodimer with CXCR5 that affects the interaction between of CXCL13 and CXCR5. Guides B-cell movement along the B-cell zone-T-cell zone boundary and later to interfollicular and outer follicular regions. Its specific expression during B-cell maturation helps position B-cells appropriately for mounting T-dependent antibody responses. Also acts as a chemotactic receptor for some T-cells upon binding to 7-alpha,25-OHC ligand. Promotes follicular helper T (Tfh) cells differentiation by positioning activated T-cells at the follicle-T-zone interface, promoting contact of newly activated CD4 T-cells with activated dendritic cells and exposing them to Tfh-cell-promoting inducible costimulator (ICOS) ligand. Expression in splenic dendritic cells is required for their homeostasis, localization and ability to induce B- and T-cell responses: GPR183 acts as a chemotactic receptor in dendritic cells that mediates the accumulation of CD4(+) dendritic cells in bridging channels. Regulates migration of astrocytes and is involved in communication between astrocytes and macrophages. Promotes osteoclast precursor migration to bone surfaces. Signals constitutively through G(i)-alpha, but not G(s)-alpha or G(q)-alpha. Signals constitutively also via MAPK1/3 (ERK1/2). This chain is G-protein coupled receptor 183, found in Mus musculus (Mouse).